A 499-amino-acid chain; its full sequence is Protein singed wings 2 (499 aa).

The N-terminal stretch at Met1–Ala29 is a signal peptide. 2 LRR repeats span residues Glu154 to Arg175 and Pro178 to Pro199. The LRRCT 1 domain occupies Asn210–Ser265. 3 LRR repeats span residues Asn307–Pro328, His332–Tyr353, and Asn357–Asn378. The 56-residue stretch at Asn394–Leu449 folds into the LRRCT 2 domain.

Functionally, has a role in the ecdysone induced cascade; probably indirect control of 'late' ecdysone genes. The polypeptide is Protein singed wings 2 (Drosophila melanogaster (Fruit fly)).